Here is a 198-residue protein sequence, read N- to C-terminus: MKQPSALSALVEALRALPGVGPKSAQRMAYHLMQHDRDGAEKLGRSLLFATEHLQHCEKCNTFTEAQICEVCLDEERDPTLLCVVETPADQIMLEQTMTYRGLYFVLMGRLSPLDGIGPKEIHFDRLVRRASDGVVKEVVLATNFTNEGEATAHYLGQTLKARGLAVTRLARGVPVGGELEYVDAGTIARAMLDRRSM.

Residues 57–72 (CEKCNTFTEAQICEVC) form a C4-type zinc finger. Residues 80-175 (TLLCVVETPA…AVTRLARGVP (96 aa)) enclose the Toprim domain.

Belongs to the RecR family.

Its function is as follows. May play a role in DNA repair. It seems to be involved in an RecBC-independent recombinational process of DNA repair. It may act with RecF and RecO. This chain is Recombination protein RecR, found in Paraburkholderia xenovorans (strain LB400).